A 284-amino-acid polypeptide reads, in one-letter code: 2-dehydro-3-deoxyphosphooctonate aldolase (284 aa).

The protein belongs to the KdsA family.

Its subcellular location is the cytoplasm. It carries out the reaction D-arabinose 5-phosphate + phosphoenolpyruvate + H2O = 3-deoxy-alpha-D-manno-2-octulosonate-8-phosphate + phosphate. It functions in the pathway carbohydrate biosynthesis; 3-deoxy-D-manno-octulosonate biosynthesis; 3-deoxy-D-manno-octulosonate from D-ribulose 5-phosphate: step 2/3. Its pathway is bacterial outer membrane biogenesis; lipopolysaccharide biosynthesis. This Vibrio atlanticus (strain LGP32) (Vibrio splendidus (strain Mel32)) protein is 2-dehydro-3-deoxyphosphooctonate aldolase.